The following is a 183-amino-acid chain: Hypoxanthine/guanine phosphoribosyltransferase (183 aa).

It belongs to the purine/pyrimidine phosphoribosyltransferase family. Archaeal HPRT subfamily. In terms of assembly, homodimer.

The protein localises to the cytoplasm. The enzyme catalyses IMP + diphosphate = hypoxanthine + 5-phospho-alpha-D-ribose 1-diphosphate. The catalysed reaction is GMP + diphosphate = guanine + 5-phospho-alpha-D-ribose 1-diphosphate. Its pathway is purine metabolism; IMP biosynthesis via salvage pathway; IMP from hypoxanthine: step 1/1. Functionally, catalyzes a salvage reaction resulting in the formation of IMP that is energically less costly than de novo synthesis. The sequence is that of Hypoxanthine/guanine phosphoribosyltransferase from Methanothermococcus okinawensis (strain DSM 14208 / JCM 11175 / IH1).